Consider the following 297-residue polypeptide: L-threonate dehydrogenase (297 aa).

Residues 3–31 and Thr-97 contribute to the NAD(+) site; that span reads RNIGVIGLGAMGFGVAQSLLRAGFNVHAC. Residue Lys-173 is part of the active site. Lys-241 contributes to the NAD(+) binding site.

It belongs to the HIBADH-related family. L-threonate dehydrogenase subfamily.

It catalyses the reaction L-threonate + NAD(+) = 2-dehydro-L-erythronate + NADH + H(+). Its function is as follows. Catalyzes oxidation of L-threonate to 2-oxo-tetronate. Can use either NAD(+) or NADP(+) as cosubstrate, with a preference for NAD(+). This Cupriavidus necator (strain ATCC 17699 / DSM 428 / KCTC 22496 / NCIMB 10442 / H16 / Stanier 337) (Ralstonia eutropha) protein is L-threonate dehydrogenase.